Here is a 304-residue protein sequence, read N- to C-terminus: Release factor glutamine methyltransferase (304 aa).

S-adenosyl-L-methionine is bound by residues aspartate 144 and asparagine 188. 188–191 lines the substrate pocket; that stretch reads NPPY.

Belongs to the protein N5-glutamine methyltransferase family. PrmC subfamily.

It catalyses the reaction L-glutaminyl-[peptide chain release factor] + S-adenosyl-L-methionine = N(5)-methyl-L-glutaminyl-[peptide chain release factor] + S-adenosyl-L-homocysteine + H(+). Its function is as follows. Methylates the class 1 translation termination release factors RF1/PrfA and RF2/PrfB on the glutamine residue of the universally conserved GGQ motif. This Mycobacterium tuberculosis (strain CDC 1551 / Oshkosh) protein is Release factor glutamine methyltransferase.